Here is a 210-residue protein sequence, read N- to C-terminus: ATP-dependent dethiobiotin synthetase BioD (210 aa).

13–18 provides a ligand contact to ATP; sequence DVGKTV. Mg(2+) is bound at residue Thr-17. The active site involves Lys-33. Arg-47 and Glu-101 together coordinate Mg(2+). ATP-binding positions include 101–104 and 185–187; these read EGAG and PPL.

It belongs to the dethiobiotin synthetase family. In terms of assembly, homodimer. It depends on Mg(2+) as a cofactor.

The protein resides in the cytoplasm. It catalyses the reaction (7R,8S)-7,8-diammoniononanoate + CO2 + ATP = (4R,5S)-dethiobiotin + ADP + phosphate + 3 H(+). The protein operates within cofactor biosynthesis; biotin biosynthesis; biotin from 7,8-diaminononanoate: step 1/2. Its function is as follows. Catalyzes a mechanistically unusual reaction, the ATP-dependent insertion of CO2 between the N7 and N8 nitrogen atoms of 7,8-diaminopelargonic acid (DAPA, also called 7,8-diammoniononanoate) to form a ureido ring. This is ATP-dependent dethiobiotin synthetase BioD from Afipia carboxidovorans (strain ATCC 49405 / DSM 1227 / KCTC 32145 / OM5) (Oligotropha carboxidovorans).